A 213-amino-acid chain; its full sequence is Small ribosomal subunit protein eS1 (213 aa).

Positions 189–213 (ARPEEVAAEEETAVDVDEEDVDVEA) are disordered. Acidic residues predominate over residues 194–213 (VAAEEETAVDVDEEDVDVEA).

This sequence belongs to the eukaryotic ribosomal protein eS1 family.

This Haloarcula marismortui (strain ATCC 43049 / DSM 3752 / JCM 8966 / VKM B-1809) (Halobacterium marismortui) protein is Small ribosomal subunit protein eS1.